Reading from the N-terminus, the 279-residue chain is MHCHAELRLSSPGQLKAARRRYKTFMIDEILSKETCDYFEKLSLYSVCPSLVVRPKPLHSCTGSPSLRAYPLLSVITRQPTVISHLVPATPGIAQALSCHQVTEAVSAEAPGGEALASSESETEQPTPRQKKPRRSRTIFTELQLMGLEKKFQKQKYLSTPDRLDLAQSLGLTQLQVKTWYQNRRMKWKKMVLKGGQEAPTKPKGRPKKNSIPTSEEIEAEEKMNSQAQGQEQLEPSQGQEELCEAQEPKARDVPLEMAEPPDPPQELPIPSSEPPPLS.

2 disordered regions span residues 110–137 (APGG…RRSR) and 194–279 (KGGQ…PPLS). Positions 118–128 (SSESETEQPTP) are enriched in polar residues. Residues 133-192 (PRRSRTIFTELQLMGLEKKFQKQKYLSTPDRLDLAQSLGLTQLQVKTWYQNRRMKWKKMV) constitute a DNA-binding region (homeobox). A compositionally biased stretch (polar residues) spans 225–240 (NSQAQGQEQLEPSQGQ). Pro residues predominate over residues 261–279 (PPDPPQELPIPSSEPPPLS).

It belongs to the BAR homeobox family. Highly expressed in adult salivary gland and at much lower levels in mammary gland, kidney and placenta.

The protein resides in the nucleus. Transcription factor. Binds optimally to the DNA consensus sequence 5'-YYTAATGRTTTTY-3'. May control the expression of neural adhesion molecules such as L1 or Ng-CAM during embryonic development of both the central and peripherical nervous system. May be involved in controlling adhesive processes in keratinizing epithelia. The sequence is that of Homeobox protein BarH-like 2 (BARX2) from Homo sapiens (Human).